The chain runs to 872 residues: Homeobox-leucine zipper protein ROC6 (872 aa).

Disordered stretches follow at residues 28–53 and 67–130; these read VHNS…GLSL and NRSL…HRHT. Residues 74–85 show a composition bias toward gly residues; that stretch reads GNGGSGSGGDGD. The segment covering 86–99 has biased composition (basic and acidic residues); sequence SLGRGREEENDSRS. Positions 119–130 are enriched in basic residues; it reads PRKKKKRYHRHT. The homeobox DNA-binding region spans 122–181; that stretch reads KKKRYHRHTPQQIQELEAVFKECPHPDEKQRMELSRRLNLESRQVKFWFQNRRTQMKQTQ. A coiled-coil region spans residues 176-248; it reads QMKQTQIERH…LKDELDRVCA (73 aa). The START domain maps to 340-583; sequence GAIDRAVLLE…LQRQCQYLAI (244 aa). A disordered region spans residues 792–818; it reads HNNGASPSPAEVGSGASPNSAAGGGGG.

It belongs to the HD-ZIP homeobox family. Class IV subfamily.

The protein localises to the nucleus. Its function is as follows. Probable transcription factor. This is Homeobox-leucine zipper protein ROC6 (ROC6) from Oryza sativa subsp. japonica (Rice).